The chain runs to 66 residues: Sodium/potassium-transporting ATPase subunit gamma (66 aa).

A helical transmembrane segment spans residues 29-46 (GGLIFAGLAFVVGLLILL).

It belongs to the FXYD family. Regulatory subunit of the sodium/potassium-transporting ATPase which is composed of a catalytic alpha subunit, an auxiliary non-catalytic beta subunit and an additional regulatory subunit. As to expression, highest levels expressed in the kidney and spleen. Restricted to the basolateral membrane in renal epithelial cells and varies in its level of expression along the nephron.

It is found in the membrane. May be involved in forming the receptor site for cardiac glycoside binding or may modulate the transport function of the sodium ATPase. The polypeptide is Sodium/potassium-transporting ATPase subunit gamma (Fxyd2) (Rattus norvegicus (Rat)).